Here is a 443-residue protein sequence, read N- to C-terminus: Thymidine phosphorylase (443 aa).

It belongs to the thymidine/pyrimidine-nucleoside phosphorylase family. As to quaternary structure, homodimer.

The enzyme catalyses thymidine + phosphate = 2-deoxy-alpha-D-ribose 1-phosphate + thymine. It functions in the pathway pyrimidine metabolism; dTMP biosynthesis via salvage pathway; dTMP from thymine: step 1/2. Functionally, the enzymes which catalyze the reversible phosphorolysis of pyrimidine nucleosides are involved in the degradation of these compounds and in their utilization as carbon and energy sources, or in the rescue of pyrimidine bases for nucleotide synthesis. The chain is Thymidine phosphorylase from Shewanella pealeana (strain ATCC 700345 / ANG-SQ1).